Here is a 144-residue protein sequence, read N- to C-terminus: Putative pre-16S rRNA nuclease (144 aa).

It belongs to the YqgF nuclease family.

Its subcellular location is the cytoplasm. Could be a nuclease involved in processing of the 5'-end of pre-16S rRNA. This is Putative pre-16S rRNA nuclease from Acaryochloris marina (strain MBIC 11017).